A 162-amino-acid chain; its full sequence is MFDLGWTELLVIGVVALIVVGPKDLPKLFRNVGRFVGKARGMAREFSRAMEDAADEAGVSDIQKTFKTATNPMGSAMDSVKQATRDLTDSIDPTKFDPESETGKLAADRAENAKKIQAATARAAADRMAREAAEAAAKAEEAEAALSATPASTASSDSETKA.

Residues 1–21 form a helical membrane-spanning segment; that stretch reads MFDLGWTELLVIGVVALIVVG. Disordered regions lie at residues 69-111 and 124-162; these read ATNP…DRAE and AADRMAREAAEAAAKAEEAEAALSATPASTASSDSETKA. Basic and acidic residues-rich tracts occupy residues 83 to 111 and 124 to 141; these read ATRDLTDSIDPTKFDPESETGKLAADRAE and AADRMAREAAEAAAKAEE. Residues 144 to 155 show a composition bias toward low complexity; sequence AALSATPASTAS.

Belongs to the TatB family. The Tat system comprises two distinct complexes: a TatABC complex, containing multiple copies of TatA, TatB and TatC subunits, and a separate TatA complex, containing only TatA subunits. Substrates initially bind to the TatABC complex, which probably triggers association of the separate TatA complex to form the active translocon.

It is found in the cell inner membrane. Part of the twin-arginine translocation (Tat) system that transports large folded proteins containing a characteristic twin-arginine motif in their signal peptide across membranes. Together with TatC, TatB is part of a receptor directly interacting with Tat signal peptides. TatB may form an oligomeric binding site that transiently accommodates folded Tat precursor proteins before their translocation. This chain is Sec-independent protein translocase protein TatB, found in Ruegeria sp. (strain TM1040) (Silicibacter sp.).